Reading from the N-terminus, the 131-residue chain is Protein ApaG (131 aa).

In terms of domain architecture, ApaG spans Arg3–Lys127.

This is Protein ApaG from Bradyrhizobium sp. (strain BTAi1 / ATCC BAA-1182).